The primary structure comprises 84 residues: UPF0291 protein SMU_447 (84 aa).

Residues 57 to 84 are disordered; that stretch reads EGNDITPAKLKEIQRQKGIHGRKPEDNS.

It belongs to the UPF0291 family.

Its subcellular location is the cytoplasm. This Streptococcus mutans serotype c (strain ATCC 700610 / UA159) protein is UPF0291 protein SMU_447.